We begin with the raw amino-acid sequence, 1002 residues long: Isoleucine--tRNA ligase (1002 aa).

Positions 70-80 (PYANGNIHIGH) match the 'HIGH' region motif. Glu630 provides a ligand contact to L-isoleucyl-5'-AMP. The 'KMSKS' region motif lies at 671-675 (KMSKS). Lys674 is an ATP binding site.

The protein belongs to the class-I aminoacyl-tRNA synthetase family. IleS type 1 subfamily. Monomer.

It is found in the cytoplasm. It catalyses the reaction tRNA(Ile) + L-isoleucine + ATP = L-isoleucyl-tRNA(Ile) + AMP + diphosphate. Catalyzes the attachment of isoleucine to tRNA(Ile). As IleRS can inadvertently accommodate and process structurally similar amino acids such as valine, to avoid such errors it has two additional distinct tRNA(Ile)-dependent editing activities. One activity is designated as 'pretransfer' editing and involves the hydrolysis of activated Val-AMP. The other activity is designated 'posttransfer' editing and involves deacylation of mischarged Val-tRNA(Ile). The sequence is that of Isoleucine--tRNA ligase from Bradyrhizobium diazoefficiens (strain JCM 10833 / BCRC 13528 / IAM 13628 / NBRC 14792 / USDA 110).